Here is a 277-residue protein sequence, read N- to C-terminus: MPTRIDRRFEELAKAGRAGLVTFVMAGDPDLSTSLEILHALVRAGADVLEVGMPFTDPMADGPAIQAAGLRALKAGMTLRKTLDMVAAFRAKDATTPIILMGYYNPIYIFGVEAFLNRAKEVGVDGLIVVDLPPEEDEELCLPARAAGLNFIRLATPTTDAVRLPAVLANTSGFLYYVSITGITGAGVPDYSKVASAVAGIKAHTNLPVAVGFGVKTAESARTIACHADAVVVGSAIVDALRASLDGEGRATPACIGTVEKLVAELAEGVRSAAAAA.

Active-site proton acceptor residues include glutamate 50 and aspartate 61.

Belongs to the TrpA family. As to quaternary structure, tetramer of two alpha and two beta chains.

The catalysed reaction is (1S,2R)-1-C-(indol-3-yl)glycerol 3-phosphate + L-serine = D-glyceraldehyde 3-phosphate + L-tryptophan + H2O. It functions in the pathway amino-acid biosynthesis; L-tryptophan biosynthesis; L-tryptophan from chorismate: step 5/5. Its function is as follows. The alpha subunit is responsible for the aldol cleavage of indoleglycerol phosphate to indole and glyceraldehyde 3-phosphate. The protein is Tryptophan synthase alpha chain of Beijerinckia indica subsp. indica (strain ATCC 9039 / DSM 1715 / NCIMB 8712).